The following is a 151-amino-acid chain: Chromophore lyase CpcS/CpeS homolog (151 aa).

Belongs to the CpcS/CpeS biliprotein lyase family.

Its subcellular location is the plastid. It localises to the chloroplast. Functionally, might function to covalently attach a chromophore to Cys residue(s) of phycobiliproteins. The chain is Chromophore lyase CpcS/CpeS homolog from Gracilaria tenuistipitata var. liui (Red alga).